Reading from the N-terminus, the 313-residue chain is Glyoxylate/hydroxypyruvate reductase A (313 aa).

The active site involves Arg-228. His-276 serves as the catalytic Proton donor.

Belongs to the D-isomer specific 2-hydroxyacid dehydrogenase family. GhrA subfamily.

The protein resides in the cytoplasm. It carries out the reaction glycolate + NADP(+) = glyoxylate + NADPH + H(+). The enzyme catalyses (R)-glycerate + NAD(+) = 3-hydroxypyruvate + NADH + H(+). The catalysed reaction is (R)-glycerate + NADP(+) = 3-hydroxypyruvate + NADPH + H(+). Its function is as follows. Catalyzes the NADPH-dependent reduction of glyoxylate and hydroxypyruvate into glycolate and glycerate, respectively. The protein is Glyoxylate/hydroxypyruvate reductase A of Serratia proteamaculans (strain 568).